We begin with the raw amino-acid sequence, 341 residues long: Mitochondrial transcription factor 1 (341 aa).

The S-adenosyl-L-methionine site is built by L23, E77, D101, and N137.

Belongs to the class I-like SAM-binding methyltransferase superfamily. rRNA adenine N(6)-methyltransferase family.

It is found in the mitochondrion intermembrane space. In terms of biological role, mitochondrial transcription factor that confers selective promoter recognition on the core subunit of the yeast mitochondrial RNA polymerase. Interacts with DNA in a non-specific manner. This chain is Mitochondrial transcription factor 1 (MTF1), found in Saccharomyces cerevisiae (strain ATCC 204508 / S288c) (Baker's yeast).